We begin with the raw amino-acid sequence, 303 residues long: N-acetyl-D-glucosamine kinase (303 aa).

Residues Gly4–Lys11 and Gly133–Leu140 contribute to the ATP site. Positions 157, 177, 179, and 184 each coordinate Zn(2+).

The protein belongs to the ROK (NagC/XylR) family. NagK subfamily.

The catalysed reaction is N-acetyl-D-glucosamine + ATP = N-acetyl-D-glucosamine 6-phosphate + ADP + H(+). It functions in the pathway cell wall biogenesis; peptidoglycan recycling. Functionally, catalyzes the phosphorylation of N-acetyl-D-glucosamine (GlcNAc) derived from cell-wall degradation, yielding GlcNAc-6-P. The sequence is that of N-acetyl-D-glucosamine kinase from Salmonella paratyphi B (strain ATCC BAA-1250 / SPB7).